The following is a 1018-amino-acid chain: MVSYLTSCLSALSTLLLLLGSQLVCPQPSTEHRKVPQRMAVTEGTPEDSGSGSPGVWGSWGPWSACSRSCSGGVMEQTRPCLPSSYRARGGSRPNGRALSITGHVVSAVRTSVPLHRSQEDQRALAGSNASRQGPAVVRGSRHPQARGREPSERRSRTRGPIGPGKYGYGKAPYILPLQTDTTHTPQRLRRQRPSSRHSRSQEASASKQGYRPPTHQFSHSQPLYQSDSGPRSGLPPSEASIYQLPLTHDQSYPAASSLFHRPELSSHHGARPHGAAQAFPQHLRSTAISCIGAYRQYKLCNTNACPESGRSIREVQCASYNNKPFMGRFYEWEPFAEVKGNRKCELNCQATGYRFYVRQAEKVIDGTPCDQNGTAICVSGQCKSIGCDDFLGSDKVLDKCGVCGGDNTGCQVVSGVFKHALTSLGYHRVVEIPQGATKINITEMHKSNNYLALRSRSGRSIINGNWAIDRPGKYEGGGTMFTYKRPNEVSSTAGESFLAEGPTNEILDVYMIHQQPNPGVHYEYVIMRNNAISPQVPPHRRPGEPFNGQLEEEDRGQEDREEREKNQEKEDSQVEAPEVFTSESTQTFPVRHPERFPSHRPDNLVPPAPQPPRRSRDHNWKQLGTTECSTTCGKGSQYPIFRCVHRNTHEEVPESYCDSSMKPTPEEEPCNLFPCPAFWDIGEWSECSKTCGLGMQHRQVLCRQVYANRSLTVQPYRCQHLEKPETTSTCQLKICSEWQIRTDWTSCSVPCGVGQRTRDVKCVSNIGDMVHDEECNMKLRPNDIENCDMGPCAKSWFLTEWSERCSAECGAGVRTRSVVCMTNHVSSLPLEGCGNNRPVEATPCDNGPCTGKVEWFTGSWSQCSIECGSGTQQREVICVRKNADTFEVLDPYECSFLEKPPSQQACHLKPCGAKWFSTEWSMCSKSCQGGFRVREVRCLSDDMTPSSLCDPQLKPEERESCNTQDCVPEVDENCKDKYYNCNVVVQARLCVYNYYKTACCASCTRVANRHVGFLGSR.

The first 26 residues, M1–P26, serve as a signal peptide directing secretion. 3 disordered regions span residues K34–V56, H116–A240, and S534–Q623. The TSP type-1 1 domain occupies P54–P307. Residues Q187 to S199 show a composition bias toward basic residues. The span at H216–G230 shows a compositional bias: polar residues. Composition is skewed to basic and acidic residues over residues Q558 to S573 and R592 to D603. 5 TSP type-1 domains span residues C676–S737, W739–P792, C793–T851, G852–P911, and C912–V968. Positions V971–A1008 constitute a PLAC domain.

As to quaternary structure, isoform 2 interacts with FBN1. Isoform 2 may interact with TGFB1. Both isoforms are expressed in the embryo from 7 dpc through 17. Isoform 1 is widely expressed in adult tissues. Isoform 2 is detected in brain, spinal cord, eye, kidney, stomach and uterus. Mainly observed in fibrillar extracellular matrices in elastic tissues (at protein level).

It localises to the secreted. The protein localises to the extracellular space. It is found in the extracellular matrix. Promotes FBN1 matrix assembly. Attenuates TGFB signaling, possibly by accelerating the sequestration of large latent complexes of TGFB or active TGFB by FBN1 microfibril assembly, thereby negatively regulating the expression of TGFB regulatory targets, such as POSTN. The protein is Thrombospondin type-1 domain-containing protein 4 (Thsd4) of Mus musculus (Mouse).